The following is a 186-amino-acid chain: ADP-ribosylation factor-like protein 8B (186 aa).

Positions 1-19 form an intramembrane region, note=Mediates targeting to membranes; the sequence is MLALISRLLDWFRSLFWKE. GTP-binding positions include 29 to 35, 71 to 75, and 130 to 133; these read QYSGKTT, DIGGQ, and NKRD. Lys-141 participates in a covalent cross-link: Glycyl lysine isopeptide (Lys-Gly) (interchain with G-Cter in ubiquitin).

It belongs to the small GTPase superfamily. Arf family. As to quaternary structure, interacts with tubulin. Interacts with BORCS5; recruits ARL8B to lysosomes. Interacts with VPS41; the interaction mediates the recruitment of the HOPS complex to lysosomes. Interacts (GTP-bound form) with PLEKHM2 (via RUN domain); the interaction is required to recruit the motor protein kinesin-1 on lysosomes. Interacts (GTP-bound form) with PLEKHM1 (via RUN domain); the interaction is required for PLEKHM1 localization to lysosomes and for ARL8B function in delivery and degradation of endocytic and autophagic cargo in lysosomes. PLEKHM1 and PLEKHM2 compete for interaction with ARL8B. Interacts (GTP-bound form) with RUFY1; the interaction is required for RUFY1 endosomal location. When GTP-bound, interacts with RUFY3 and RUFY4, but not with RUFY1, nor RUFY2. Post-translationally, ubiquitinated at Lys-141 by RNF167, leading to its degradation.

The protein resides in the late endosome membrane. Its subcellular location is the lysosome membrane. The protein localises to the cytoplasm. It localises to the cytoskeleton. It is found in the spindle. The protein resides in the cell projection. Its subcellular location is the axon. The protein localises to the synapse. It localises to the cytolytic granule membrane. It is found in the early endosome membrane. It catalyses the reaction GTP + H2O = GDP + phosphate + H(+). Its function is as follows. Small GTPase which cycles between active GTP-bound and inactive GDP-bound states. In its active state, binds to a variety of effector proteins playing a key role in the regulation of lysosomal positioning which is important for nutrient sensing, natural killer cell-mediated cytotoxicity and antigen presentation. Along with its effectors, orchestrates lysosomal transport and fusion. Localizes specifically to lysosomal membranes and mediates anterograde lysosomal motility by recruiting PLEKHM2, which in turn recruits the motor protein kinesin-1 on lysosomes. Required for lysosomal and cytolytic granule exocytosis. Critical factor involved in NK cell-mediated cytotoxicity. Drives the polarization of cytolytic granules and microtubule-organizing centers (MTOCs) toward the immune synapse between effector NK lymphocytes and target cells. In neurons, mediates the anterograde axonal long-range transport of presynaptic lysosome-related vesicles required for presynaptic biogenesis and synaptic function. Also acts as a regulator of endosome to lysosome trafficking pathways of special significance for host defense. Recruits RUFY1 onto early endosomes regulating endosomes to trans-Golgi network proteins retrieval. Regulates cargo trafficking to lysosomes by binding to PLEKHM1 and recruiting the HOPS subunit VPS41, resulting in functional assembly of the HOPS complex on lysosomal membranes. Plays an important role in cargo delivery to lysosomes for antigen presentation and microbial killing. Directs the intersection of CD1d with lipid antigens in lysosomes, and plays a role in intersecting phagosomes with lysosomes to generate phagolysosomes that kill microbes. Involved in the process of MHC II presentation. Regulates the delivery of antigens to lysosomes and the formation of MHC II-peptide complexes through the recruitment of the HOPS complex to lysosomes allowing the fusion of late endosomes to lysosomes. May play a role in chromosome segregation. This chain is ADP-ribosylation factor-like protein 8B (ARL8B), found in Pongo abelii (Sumatran orangutan).